Consider the following 359-residue polypeptide: Molybdenum import ATP-binding protein ModC (359 aa).

One can recognise an ABC transporter domain in the interval Met-1–Val-233. An ATP-binding site is contributed by Gly-32–Thr-39. One can recognise a Mop domain in the interval Ala-289–Ala-355.

Belongs to the ABC transporter superfamily. Molybdate importer (TC 3.A.1.8) family. As to quaternary structure, the complex is composed of two ATP-binding proteins (ModC), two transmembrane proteins (ModB) and a solute-binding protein (ModA).

It is found in the cell inner membrane. The enzyme catalyses molybdate(out) + ATP + H2O = molybdate(in) + ADP + phosphate + H(+). Part of the ABC transporter complex ModABC involved in molybdenum import. Responsible for energy coupling to the transport system. In Brucella abortus (strain 2308), this protein is Molybdenum import ATP-binding protein ModC.